The sequence spans 295 residues: Pyridoxal 5'-phosphate synthase subunit PdxS (295 aa).

Position 25 (aspartate 25) interacts with D-ribose 5-phosphate. The active-site Schiff-base intermediate with D-ribose 5-phosphate is lysine 82. Glycine 154 serves as a coordination point for D-ribose 5-phosphate. Arginine 166 serves as a coordination point for D-glyceraldehyde 3-phosphate. D-ribose 5-phosphate is bound by residues glycine 215 and 236-237 (GS).

It belongs to the PdxS/SNZ family. As to quaternary structure, in the presence of PdxT, forms a dodecamer of heterodimers.

It carries out the reaction aldehydo-D-ribose 5-phosphate + D-glyceraldehyde 3-phosphate + L-glutamine = pyridoxal 5'-phosphate + L-glutamate + phosphate + 3 H2O + H(+). It participates in cofactor biosynthesis; pyridoxal 5'-phosphate biosynthesis. Functionally, catalyzes the formation of pyridoxal 5'-phosphate from ribose 5-phosphate (RBP), glyceraldehyde 3-phosphate (G3P) and ammonia. The ammonia is provided by the PdxT subunit. Can also use ribulose 5-phosphate and dihydroxyacetone phosphate as substrates, resulting from enzyme-catalyzed isomerization of RBP and G3P, respectively. The chain is Pyridoxal 5'-phosphate synthase subunit PdxS from Staphylococcus saprophyticus subsp. saprophyticus (strain ATCC 15305 / DSM 20229 / NCIMB 8711 / NCTC 7292 / S-41).